We begin with the raw amino-acid sequence, 193 residues long: NADH-quinone oxidoreductase subunit B (193 aa).

[4Fe-4S] cluster is bound by residues Cys-72, Cys-73, Cys-137, and Cys-167.

This sequence belongs to the complex I 20 kDa subunit family. As to quaternary structure, NDH-1 is composed of 14 different subunits. Subunits NuoB, C, D, E, F, and G constitute the peripheral sector of the complex. [4Fe-4S] cluster serves as cofactor.

It is found in the cell inner membrane. The catalysed reaction is a quinone + NADH + 5 H(+)(in) = a quinol + NAD(+) + 4 H(+)(out). In terms of biological role, NDH-1 shuttles electrons from NADH, via FMN and iron-sulfur (Fe-S) centers, to quinones in the respiratory chain. The immediate electron acceptor for the enzyme in this species is believed to be ubiquinone. Couples the redox reaction to proton translocation (for every two electrons transferred, four hydrogen ions are translocated across the cytoplasmic membrane), and thus conserves the redox energy in a proton gradient. The sequence is that of NADH-quinone oxidoreductase subunit B from Bartonella henselae (strain ATCC 49882 / DSM 28221 / CCUG 30454 / Houston 1) (Rochalimaea henselae).